Consider the following 1026-residue polypeptide: Leucine-rich repeat and coiled-coil domain-containing protein 1 (1026 aa).

5 LRR repeats span residues 39–60 (SIHA…DHIW), 61–82 (NLRH…NTLT), 83–104 (KLCT…EALV), 105–126 (NLTK…MPLH), and 131–152 (KLRY…LQCT). The region spanning 170 to 212 (NPICLIPGYRAIILQTLPQLRILDCKNIFGEPVSLEEINSSHL) is the LRRCT domain. The disordered stretch occupies residues 310 to 338 (DNVPEKDLRPKRDTDITSESDYGNRRECS). Basic and acidic residues predominate over residues 312–324 (VPEKDLRPKRDTD). Residues 428-641 (REMRWKAEQT…DLENEFRIAL (214 aa)) adopt a coiled-coil conformation.

It belongs to the LRRCC1 family.

The protein resides in the cytoplasm. Its subcellular location is the cytoskeleton. It is found in the microtubule organizing center. It localises to the centrosome. The protein localises to the centriole. Its function is as follows. Required for the organization of the mitotic spindle. Maintains the structural integrity of centrosomes during mitosis. In Mus musculus (Mouse), this protein is Leucine-rich repeat and coiled-coil domain-containing protein 1 (Lrrcc1).